The chain runs to 123 residues: U11/U12 small nuclear ribonucleoprotein 25 kDa protein (123 aa).

Positions 32 to 123 constitute a Ubiquitin-like domain; it reads MTVRVCKMDG…VSFIKKLRQK (92 aa).

In terms of assembly, component of the U11/U12 snRNPs that are part of the U12-type spliceosome.

It localises to the nucleus. This is U11/U12 small nuclear ribonucleoprotein 25 kDa protein (Snrnp25) from Mus musculus (Mouse).